Here is a 181-residue protein sequence, read N- to C-terminus: uncharacterized protein (181 aa).

Residues 1 to 178 enclose the Macro domain; sequence MVVAYKLSNG…VFKKVFDNSL (178 aa).

This is an uncharacterized protein from Sulfolobus acidocaldarius (strain ATCC 33909 / DSM 639 / JCM 8929 / NBRC 15157 / NCIMB 11770).